Reading from the N-terminus, the 195-residue chain is dTTP/UTP pyrophosphatase (195 aa).

The Proton acceptor role is filled by D73.

This sequence belongs to the Maf family. YhdE subfamily. A divalent metal cation is required as a cofactor.

The protein resides in the cytoplasm. The enzyme catalyses dTTP + H2O = dTMP + diphosphate + H(+). The catalysed reaction is UTP + H2O = UMP + diphosphate + H(+). Functionally, nucleoside triphosphate pyrophosphatase that hydrolyzes dTTP and UTP. May have a dual role in cell division arrest and in preventing the incorporation of modified nucleotides into cellular nucleic acids. In Deinococcus radiodurans (strain ATCC 13939 / DSM 20539 / JCM 16871 / CCUG 27074 / LMG 4051 / NBRC 15346 / NCIMB 9279 / VKM B-1422 / R1), this protein is dTTP/UTP pyrophosphatase.